We begin with the raw amino-acid sequence, 135 residues long: Large ribosomal subunit protein uL16c (135 aa).

The span at 1 to 17 (MLSPKRTRFRKQHRGRM) shows a compositional bias: basic residues. Residues 1 to 20 (MLSPKRTRFRKQHRGRMKGT) are disordered.

The protein belongs to the universal ribosomal protein uL16 family. As to quaternary structure, part of the 50S ribosomal subunit.

It is found in the plastid. The protein localises to the chloroplast. The sequence is that of Large ribosomal subunit protein uL16c from Lemna minor (Common duckweed).